Reading from the N-terminus, the 210-residue chain is Scoloptoxin SSD552 (210 aa).

The N-terminal stretch at 1–23 is a signal peptide; it reads MNILLSSTLFVLLMFQIIGSGMG.

Contains 3 disulfide bonds. As to expression, expressed by the venom gland.

The protein resides in the secreted. This is Scoloptoxin SSD552 from Scolopendra dehaani (Thai centipede).